A 354-amino-acid chain; its full sequence is Inactive ADP-ribosyltransferase arh2 (354 aa).

Belongs to the ADP-ribosylglycohydrolase family. As to expression, expressed in heart (at protein level). A short form is detected in both heart and tadpole tail (at protein level).

The protein localises to the cytoplasm. It localises to the myofibril. Its subcellular location is the sarcomere. Required for myofibril assembly and outgrowth of the cardiac chambers in the developing heart. Appears to be catalytically inactive, showing no activity against O-acetyl-ADP-ribose. In Xenopus laevis (African clawed frog), this protein is Inactive ADP-ribosyltransferase arh2 (adprhl1).